We begin with the raw amino-acid sequence, 754 residues long: Polycomb protein mes-3 (754 aa).

Residues 1–83 form a disordered region; sequence MTPATAEVKV…PTKLENIQKT (83 aa). Over residues 31-40 the composition is skewed to basic and acidic residues; sequence ARREEEKENL. Low complexity predominate over residues 51–61; sequence SSEAGSSRESS.

As to quaternary structure, forms a heterotrimeric complex with the Polycomb proteins mes-2 and mes-3. Does not interact with mes-4. Interacts with nyfa-1. In adults, it is predominantly expressed in the germline, and weakly expressed in intestinal cells.

The protein resides in the nucleus. Component of a Polycomb group (PcG) complex. PcG proteins act by forming multiprotein complexes, which are required to maintain the transcriptionally repressive state of homeotic genes throughout development. In association with the nfya-1-NF-Y complex, may play a role in repressing the expression of the homeobox protein egl-5 in tissues such as the head. PcG proteins are not required to initiate repression, but to maintain it during later stages of development. The mes-2/mes-3/mes-6 complex may participate in the global inactivation of the X chromosomes in germline cells. The complex may act via methylation of histone H3 'Lys-27', rendering chromatin heritably changed in its expressibility. This complex is required to exclude mes-4 from the inactivated X-chromosomes in germline cells. The sequence is that of Polycomb protein mes-3 from Caenorhabditis elegans.